We begin with the raw amino-acid sequence, 142 residues long: Large ribosomal subunit protein uL13 (142 aa).

It belongs to the universal ribosomal protein uL13 family. In terms of assembly, part of the 50S ribosomal subunit.

Its function is as follows. This protein is one of the early assembly proteins of the 50S ribosomal subunit, although it is not seen to bind rRNA by itself. It is important during the early stages of 50S assembly. This is Large ribosomal subunit protein uL13 from Syntrophus aciditrophicus (strain SB).